A 149-amino-acid chain; its full sequence is Tetracenomycin polyketide synthase protein TcmJ (149 aa).

In terms of domain architecture, Cupin type-2 spans 51–117; that stretch reads HIELAPGESV…NRGNVPARVV (67 aa). Residues 127-149 form a disordered region; the sequence is PELGHVDTEPVPNPAAAPPKVGG.

The tetracenomycin polyketide synthase (TCM PKS) is composed of a ketosynthase complex (TcmKL), an acyl carrier protein (TcmM), a cyclase (TcmN) and a probable second cyclase (TcmJ).

The catalysed reaction is 10 malonyl-CoA + 8 H(+) = tetracenomycin F2 + 10 CO2 + 10 CoA + 2 H2O. It functions in the pathway antibiotic biosynthesis; tetracenomycin C biosynthesis. In terms of biological role, involved in the biosynthesis of tetracenomycin C (TCM C). Part of a type II polyketide synthase (PKS) that catalyzes the synthesis of tetracenomycin F2 (TCM F2), a precursor of TCM C, from malonyl-CoA. TcmJ, while not absolutely required, greatly increases the tetracenomycin F2 production. It probably acts as a cyclase. This Streptomyces glaucescens protein is Tetracenomycin polyketide synthase protein TcmJ.